Consider the following 285-residue polypeptide: MVNILKKRAFGGAILAALLLASSAYVGAQSAPAAGAQGKTELLWFGQAGFRIKTPQGKMILIDPWITGGPKTPPMYKNDLAAIGPIDLLLVTHAHVDHLGDAPTIAKTNNTKLYGPADMVTPLTTLGVLPAELGYRFNKTGQVTPLPGIKVTAVQAEHSSLLVWKNPATDKLESHPAGEPMGYIIELENGFKIWHMGDTGLFSDMKFISEHYKPDLVLIPIGGNFTMAPDDAAYALRTWVKPKMVIPMHYNSNPMTKGTLAEFQAAMKGSNIKVIPMTEGETVQF.

It belongs to the UPF0173 family.

The chain is UPF0173 metal-dependent hydrolase Pnuc_1524 from Polynucleobacter asymbioticus (strain DSM 18221 / CIP 109841 / QLW-P1DMWA-1) (Polynucleobacter necessarius subsp. asymbioticus).